We begin with the raw amino-acid sequence, 469 residues long: Sulfate adenylyltransferase subunit 1 (469 aa).

Residues Lys-22–Asp-236 form the tr-type G domain. Positions Gly-31 to Ser-38 are G1. Residue Gly-31–Ser-38 participates in GTP binding. The tract at residues Gly-89–Asp-93 is G2. Residues Asp-110 to Gly-113 form a G3 region. GTP contacts are provided by residues Asp-110–His-114 and Asn-165–Asp-168. The tract at residues Asn-165–Asp-168 is G4. Residues Ser-202–Leu-204 are G5.

This sequence belongs to the TRAFAC class translation factor GTPase superfamily. Classic translation factor GTPase family. CysN/NodQ subfamily. In terms of assembly, heterodimer composed of CysD, the smaller subunit, and CysN.

The catalysed reaction is sulfate + ATP + H(+) = adenosine 5'-phosphosulfate + diphosphate. It participates in sulfur metabolism; hydrogen sulfide biosynthesis; sulfite from sulfate: step 1/3. In terms of biological role, with CysD forms the ATP sulfurylase (ATPS) that catalyzes the adenylation of sulfate producing adenosine 5'-phosphosulfate (APS) and diphosphate, the first enzymatic step in sulfur assimilation pathway. APS synthesis involves the formation of a high-energy phosphoric-sulfuric acid anhydride bond driven by GTP hydrolysis by CysN coupled to ATP hydrolysis by CysD. The polypeptide is Sulfate adenylyltransferase subunit 1 (Pseudoalteromonas atlantica (strain T6c / ATCC BAA-1087)).